A 113-amino-acid chain; its full sequence is Ribonuclease P protein component (113 aa).

The protein belongs to the RnpA family. In terms of assembly, consists of a catalytic RNA component (M1 or rnpB) and a protein subunit.

The enzyme catalyses Endonucleolytic cleavage of RNA, removing 5'-extranucleotides from tRNA precursor.. In terms of biological role, RNaseP catalyzes the removal of the 5'-leader sequence from pre-tRNA to produce the mature 5'-terminus. It can also cleave other RNA substrates such as 4.5S RNA. The protein component plays an auxiliary but essential role in vivo by binding to the 5'-leader sequence and broadening the substrate specificity of the ribozyme. In Vesicomyosocius okutanii subsp. Calyptogena okutanii (strain HA), this protein is Ribonuclease P protein component.